The following is a 377-amino-acid chain: Leukocyte elastase inhibitor (377 aa).

M1 carries the post-translational modification N-acetylmethionine.

The protein belongs to the serpin family. Ov-serpin subfamily.

The protein localises to the cytoplasm. In terms of biological role, regulates the activity of the neutrophil proteases. In Xenopus laevis (African clawed frog), this protein is Leukocyte elastase inhibitor (serpinb1).